We begin with the raw amino-acid sequence, 172 residues long: Myosin regulatory light chain 2, smooth muscle minor isoform (172 aa).

At serine 2 the chain carries N-acetylserine. Residue threonine 19 is modified to Phosphothreonine; by MLCK. A Phosphoserine; by MLCK modification is found at serine 20. 3 consecutive EF-hand domains span residues 29-64 (SQIQ…LGKN), 98-133 (DPED…MGDR), and 134-169 (FTDE…GAKD). Ca(2+) contacts are provided by aspartate 42, asparagine 44, aspartate 46, and aspartate 53.

Myosin is a hexamer of 2 heavy chains and 4 light chains. In terms of processing, phosphorylation increases the actin-activated myosin ATPase activity and thereby regulates the contractile activity.

Myosin regulatory subunit that plays an important role in regulation of both smooth muscle and nonmuscle cell contractile activity. Implicated in cytokinesis, receptor capping, and cell locomotion. This is Myosin regulatory light chain 2, smooth muscle minor isoform from Gallus gallus (Chicken).